The primary structure comprises 163 residues: Cytochrome b6-f complex subunit 4 (163 aa).

A run of 3 helical transmembrane segments spans residues 36-56, 95-115, and 131-151; these read LLYI…GLAV, LLGV…PFLE, and TVFL…TLPI.

The protein belongs to the cytochrome b family. PetD subfamily. As to quaternary structure, the 4 large subunits of the cytochrome b6-f complex are cytochrome b6, subunit IV (17 kDa polypeptide, petD), cytochrome f and the Rieske protein, while the 4 small subunits are petG, petL, petM and petN. The complex functions as a dimer.

It localises to the plastid. The protein localises to the chloroplast thylakoid membrane. Component of the cytochrome b6-f complex, which mediates electron transfer between photosystem II (PSII) and photosystem I (PSI), cyclic electron flow around PSI, and state transitions. In Phalaenopsis aphrodite subsp. formosana (Moth orchid), this protein is Cytochrome b6-f complex subunit 4.